A 128-amino-acid polypeptide reads, in one-letter code: Small ribosomal subunit protein eS8 (128 aa).

It belongs to the eukaryotic ribosomal protein eS8 family. As to quaternary structure, part of the 30S ribosomal subunit.

This is Small ribosomal subunit protein eS8 from Methanococcus maripaludis (strain C6 / ATCC BAA-1332).